The chain runs to 180 residues: Type-1 fimbrial protein, C chain (180 aa).

The N-terminal stretch at 1-23 (MKLKFISMAVFSALTLGVATNAS) is a signal peptide. Cysteines 44 and 84 form a disulfide.

Belongs to the fimbrial protein family.

The protein localises to the fimbrium. Fimbriae (also called pili), polar filaments radiating from the surface of the bacterium to a length of 0.5-1.5 micrometers and numbering 100-300 per cell, enable bacteria to colonize the epithelium of specific host organs. This Escherichia coli O6:H1 (strain CFT073 / ATCC 700928 / UPEC) protein is Type-1 fimbrial protein, C chain (pilC).